A 656-amino-acid polypeptide reads, in one-letter code: MSYQRNSARASLDLRSQYQQLEGRMRSEHFNPAYQQQQQKGQNIPLSLPSSLAQRNPIPYPIDAVTSDPTIPAQLNVYDHDRQNSIVDAAAGTNTTHSLNSNNIPSSQNNNINNNNINNVGSFTDPSMLTLPKMSLHSHQKQYDSNQNDPRSPLAILIPTSAQPTDVLSARFSAWRNVIRAILVYLSETASIQDEIVRQQLRLSHAVQFPFFSIENQYQPVSNEDKSMQKFFLPLGSGSVQDLPTMLTKYHDNLASLASKSSKELTSEIIPRLEDLRRDLLVKIKEIKALQSDFKNSCNKELQQTKHLMKLFNESLKECKLGTPKSDPFLIKLQLEKQIKRQLVEENYLHEAFDNLQNSGAQLESVIVMEIQNGLTSYARILGKEAQVVFDSVISKLDSTILNKNTNLEWDSFILRNISNFVPPNLPMRRFKEISYSNQNDPFTFEVKSGFLEKRSKFLKSYSRGFYVLTPSFLHEFKTPDKHKFSTPLMSIPLVECTVTEHSKKTKSNSEQGKNKFILRTNSNGLIHRGHNWVFKVDSYDDMIEWFGNIKALSSLPNYDDKCKYVSKVAKLSKEKAKSNENTTESVTPQVTNEQHTRYDDVSSSNFPLNSIPKLDNLTITNTTSSIPETNDSQIQNRVPEFYIENVDSPRKSNQL.

The PH domain maps to 445 to 555 (FEVKSGFLEK…WFGNIKALSS (111 aa)). Residues 577 to 605 (AKSNENTTESVTPQVTNEQHTRYDDVSSS) form a disordered region. Polar residues predominate over residues 580-594 (NENTTESVTPQVTNE). The residue at position 626 (Ser626) is a Phosphoserine. The PXIXIT-like, required for interaction with CNA1 and CNA2, and calcineurin-dependent dephosphorylation signature appears at 640 to 645 (PEFYIE). Residues Ser649 and Ser653 each carry the phosphoserine modification.

Heterodimer of SLM1-SLM2. Binds phosphatidylinositol 4,5-bisphosphate, which is required for function. Interacts with the TORC2 subunits AVO2, BIT61 and TOR2. Interacts with the calcineurin catalytic subunits CNA1 and CNA2.

The protein resides in the cell membrane. Together with SLM1, effector of the TORC2- and calcineurin-signaling pathways. Phosphorylated and activated by TORC2 under favorable growth conditions. Mediates actin polarization via inhibition of calcineurin-dependent transcription. Upon nutrient limitation or environmental stress, gets dephosphorylated by calcineurin, inhibiting interaction with TORC2, thereby antagonizing TORC2 signaling and mediating calcineurin-dependent actin depolarization. Also functions in heat-induced, calcineurin-mediated uracil permease (FUR4) endocytosis. The sequence is that of Phosphatidylinositol 4,5-bisphosphate-binding protein SLM2 (SLM2) from Saccharomyces cerevisiae (strain ATCC 204508 / S288c) (Baker's yeast).